The primary structure comprises 409 residues: Peptidase T (409 aa).

H78 is a binding site for Zn(2+). D80 is a catalytic residue. D140 provides a ligand contact to Zn(2+). E173 acts as the Proton acceptor in catalysis. Zn(2+)-binding residues include E174, D196, and H379.

This sequence belongs to the peptidase M20B family. Zn(2+) is required as a cofactor.

The protein localises to the cytoplasm. The catalysed reaction is Release of the N-terminal residue from a tripeptide.. Functionally, cleaves the N-terminal amino acid of tripeptides. This is Peptidase T from Salmonella heidelberg (strain SL476).